A 222-amino-acid polypeptide reads, in one-letter code: Protein GrpE (222 aa).

Residues 1-82 (MSDFNKDEYL…KADDTLTPLG (82 aa)) form a disordered region. Low complexity predominate over residues 20–71 (SGQAAPAAASADSAAAAAGATQEGAAQPAAAQSQENGDSAAADGADKAGAAD).

The protein belongs to the GrpE family. As to quaternary structure, homodimer.

Its subcellular location is the cytoplasm. Its function is as follows. Participates actively in the response to hyperosmotic and heat shock by preventing the aggregation of stress-denatured proteins, in association with DnaK and GrpE. It is the nucleotide exchange factor for DnaK and may function as a thermosensor. Unfolded proteins bind initially to DnaJ; upon interaction with the DnaJ-bound protein, DnaK hydrolyzes its bound ATP, resulting in the formation of a stable complex. GrpE releases ADP from DnaK; ATP binding to DnaK triggers the release of the substrate protein, thus completing the reaction cycle. Several rounds of ATP-dependent interactions between DnaJ, DnaK and GrpE are required for fully efficient folding. In Bifidobacterium adolescentis (strain ATCC 15703 / DSM 20083 / NCTC 11814 / E194a), this protein is Protein GrpE.